The primary structure comprises 206 residues: UPF0328 protein ECU01_0050/ECU01_1560 (206 aa).

Disordered stretches follow at residues 1–153 (MPRP…HSHT) and 179–206 (GRLHGSPTKGAQTAQQAQPHPPKQLATL). Residues 74-96 (HTEGCHTHEANPEPNTKHTETES) are compositionally biased toward basic and acidic residues. Polar residues-rich tracts occupy residues 97–120 (PKPQTSTQHHTPITIPSSLLSQNT) and 132–148 (SRPSTIPANTYQPQSPH).

It belongs to the UPF0328 family.

The polypeptide is UPF0328 protein ECU01_0050/ECU01_1560 (Encephalitozoon cuniculi (strain GB-M1) (Microsporidian parasite)).